The chain runs to 857 residues: Mitogen-activated protein kinase kinase kinase dlk-1 (857 aa).

Residues 62–304 (ISNLEWLGSG…FSHIRQHWEI (243 aa)) form the Protein kinase domain. ATP is bound by residues 68–76 (LGSGSQGAV) and Lys-89. Asp-173 acts as the Proton acceptor in catalysis. Disordered stretches follow at residues 441–503 (EEMS…ISRN), 572–625 (RIAS…PSRN), 733–775 (NAND…MESE), and 818–857 (HSIKTHRRTSSNPQAIIHQRIEEYSSSATEDSDDAGAVRI). Residues 467–488 (SSGAQSSPFSRQSSCRSSAGQQ) are compositionally biased toward low complexity. Residues 609–623 (APRSSSKLNRSSYPS) show a composition bias toward polar residues. Positions 753 to 762 (ADVESSEDEG) are enriched in acidic residues. Residues 763–772 (NGNNILNTSM) are compositionally biased toward polar residues.

It belongs to the protein kinase superfamily. STE Ser/Thr protein kinase family. MAP kinase kinase kinase subfamily. Requires Mg(2+) as cofactor. Post-translationally, ubiquitinated by rpm-1. Negatively regulated by ubiquitination by fsn-1 bound rpm-1, followed by degradation.

The protein localises to the synapse. The catalysed reaction is L-seryl-[protein] + ATP = O-phospho-L-seryl-[protein] + ADP + H(+). It carries out the reaction L-threonyl-[protein] + ATP = O-phospho-L-threonyl-[protein] + ADP + H(+). Component of a MAP kinase pathway that functions presynaptically to regulate synaptic architecture and presynaptic differentiation. Phosphorylates and activates mkk-4. The polypeptide is Mitogen-activated protein kinase kinase kinase dlk-1 (Caenorhabditis briggsae).